Reading from the N-terminus, the 288-residue chain is Homeobox protein Hox-B4a (288 aa).

Residues 10-136 form a disordered region; that stretch reads SNYVDPKFPP…ASSPASTRKD (127 aa). Positions 118–132 are enriched in polar residues; the sequence is CGQTPHSQGASSPAS. An Antp-type hexapeptide motif is present at residues 139–144; that stretch reads VYPWMK. Positions 160 to 219 form a DNA-binding region, homeobox; it reads PKRSRTAYTRQQVLELEKEFHYNRYLTRRRRVEIAHTLCLSERQIKIWFQNRRMKWKKDH.

The protein belongs to the Antp homeobox family. Deformed subfamily.

It localises to the nucleus. Sequence-specific transcription factor which is part of a developmental regulatory system that provides cells with specific positional identities on the anterior-posterior axis. This Takifugu rubripes (Japanese pufferfish) protein is Homeobox protein Hox-B4a (hoxb4a).